An 87-amino-acid polypeptide reads, in one-letter code: Defensin-A (87 aa).

An N-terminal signal peptide occupies residues 1–19 (MKFYLVLAFLTLCAVAVTA). A propeptide spanning residues 20–44 (LPAGDETRIDLETLEEDLRLVDGAQ) is cleaved from the precursor. 3 cysteine pairs are disulfide-bonded: C57–C78, C64–C83, and C68–C85.

In terms of tissue distribution, hemolymph and fat body.

Its subcellular location is the secreted. Its function is as follows. Antibacterial peptide mostly active against Gram-positive and Gram negative bacteria. This is Defensin-A from Glossina morsitans morsitans (Savannah tsetse fly).